The primary structure comprises 341 residues: MRDHVEFCYYVIIYSLEKFQQRSKQFGISLFIFFLATAAVTVIVPTLLGVSQRGFFCDDDSIRYEYRKDTITAVQLMLYNLVLNAATVLFVEYYRMQKVESNINNPRYRWRNNHLHVLFVRLLTYFGYSQIGFVMNIALNIVTKHVVGRLRPHFLDVCKLANDTCVTGDSHRYITDYTCTGPPELVLEARKSFYSGHSAVSLYCATWSALYIQARLGPVLNNRIVVPISQTLMFMIGLGISFSRITDNKHHWSDVLVGIFIGIFLAVYTCTFWTDLFSNNSTESETQPLLLPRPPRTPRNSEDEERHRLDAVLPSTDSSIVFEATGPQDSDTILLPVPQSA.

Transmembrane regions (helical) follow at residues 30–50, 71–91, and 122–142; these read LFIF…LLGV, ITAV…VLFV, and LLTY…LNIV. N-linked (GlcNAc...) asparagine glycosylation is present at asparagine 162. The next 2 membrane-spanning stretches (helical) occupy residues 223-243 and 257-277; these read RIVV…ISFS and VGIF…TDLF. Disordered stretches follow at residues 284–308 and 322–341; these read SETQ…ERHR and FEAT…PQSA. Basic and acidic residues predominate over residues 299 to 308; it reads RNSEDEERHR.

Belongs to the PA-phosphatase related phosphoesterase family.

The protein resides in the membrane. This Caenorhabditis elegans protein is Phospholipid phosphatase homolog 1.2 homolog.